Consider the following 377-residue polypeptide: MAITVNTNVAALVAQRHLTSATDMLNQSMERLSSGKRINSAKDDAAGLQISNRLQSQMSGLDVAVRNANDGISIMQTAEGAMNEVTNIMQRMRDLSLQSANGSNSQVERTALQEEVTALNDELNRIAETTSFGGRKLLNGAFGKSSFQIGAASGEAVQIELKSMRTDGLEMGGFSYVAQGRADSDWQVKENANDLTMSFINRSGETEKIQINAKSGDDIEELATYINGQTDKVTASVNEKGQLQIFMAGEDTAGTISFSGDLASELGMSLKGYDAVNNLNITTVGGAQQAVAVLDTAMKFVDSQRAELGAYQNRFNHAINNLDNIHENLAASNSRIQDTDYAKETTQMVKQQILQQVSTTILAQAKQAPNLALTLLG.

Coiled coils occupy residues 98–131 (QSAN…ETTS) and 302–339 (DSQR…IQDT).

This sequence belongs to the bacterial flagellin family. In terms of assembly, heteromer of multiple flagellin subunits including FlaA, FlaB/D, FlaC, FlaE and FlaF.

The protein localises to the secreted. It localises to the bacterial flagellum. In terms of biological role, flagellin is the subunit protein which polymerizes to form the filaments of bacterial flagella. The sequence is that of Polar flagellin F (flaF) from Vibrio parahaemolyticus serotype O3:K6 (strain RIMD 2210633).